A 593-amino-acid chain; its full sequence is Glutamate decarboxylase 1 (593 aa).

Residues 1 to 12 (MASSTPSPATSS) show a composition bias toward low complexity. The interval 1–22 (MASSTPSPATSSNAGADPNTTN) is disordered. The residue at position 77 (serine 77) is a Phosphoserine. 189 to 191 (QLS) contacts 4-aminobutanoate. Lysine 404 carries the N6-(pyridoxal phosphate)lysine modification. Arginine 566 contributes to the 4-aminobutanoate binding site.

Belongs to the group II decarboxylase family. Homodimer. It depends on pyridoxal 5'-phosphate as a cofactor. As to expression, expressed in brain and pancreatic islets.

It catalyses the reaction L-glutamate + H(+) = 4-aminobutanoate + CO2. Functionally, catalyzes the synthesis of the inhibitory neurotransmitter gamma-aminobutyric acid (GABA) with pyridoxal 5'-phosphate as cofactor. The chain is Glutamate decarboxylase 1 (Gad1) from Rattus norvegicus (Rat).